We begin with the raw amino-acid sequence, 334 residues long: B1 bradykinin receptor (334 aa).

Residues 1 to 21 (MASQASLKLQPSNQSQQAPPN) are disordered. The Extracellular segment spans residues 1 to 41 (MASQASLKLQPSNQSQQAPPNITSCEGAPEAWDLLCRVLPG). The span at 10–21 (QPSNQSQQAPPN) shows a compositional bias: low complexity. N-linked (GlcNAc...) asparagine glycans are attached at residues Asn-13 and Asn-21. A helical membrane pass occupies residues 42-62 (FVITVCFFGLLGNLLVLSFFL). Topologically, residues 63–80 (LPWRRWWQQRRQRLTIAE) are cytoplasmic. The helical transmembrane segment at 81 to 101 (IYLANLAASDLVFVLGLPFWA) threads the bilayer. Topologically, residues 102-118 (ENVGNRFNWPFGSDLCR) are extracellular. Cys-117 and Cys-196 form a disulfide bridge. Residues 119 to 139 (VVSGVIKANLFISIFLVVAIS) traverse the membrane as a helical segment. Residues 140-161 (QDRYRLLVYPMTSWGNRRRRQA) are Cytoplasmic-facing. Residues 162–182 (QVTCLLIWVAGGLLSTPTFLL) form a helical membrane-spanning segment. Residues 183-214 (RSVKVVPDLNISACILLFPHEAWHFVRMVELN) are Extracellular-facing. Asn-192 carries an N-linked (GlcNAc...) asparagine glycan. The chain crosses the membrane as a helical span at residues 215-235 (VLGFLLPLAAILYFNFHILAS). Over 236–258 (LRGQKEASRTRCGGPKDSKTMGL) the chain is Cytoplasmic. The helical transmembrane segment at 259–279 (ILTLVASFLVCWAPYHFFAFL) threads the bilayer. The Extracellular segment spans residues 280-302 (DFLVQVRVIQDCFWKELTDLGLQ). Residues 303–323 (LANFFAFVNSCLNPLIYVFAG) traverse the membrane as a helical segment. Residues 324 to 334 (RLFKTRVLGTL) are Cytoplasmic-facing.

This sequence belongs to the G-protein coupled receptor 1 family. Bradykinin receptor subfamily. BDKRB1 sub-subfamily. In terms of tissue distribution, expressed in heart, liver and lung.

The protein resides in the cell membrane. Its function is as follows. This is a receptor for bradykinin. Could be a factor in chronic pain and inflammation. This Mus musculus (Mouse) protein is B1 bradykinin receptor (Bdkrb1).